Reading from the N-terminus, the 459-residue chain is UDP-N-acetylmuramoyl-tripeptide--D-alanyl-D-alanine ligase (459 aa).

121 to 127 (GSSGKTT) contributes to the ATP binding site.

This sequence belongs to the MurCDEF family. MurF subfamily.

The protein localises to the cytoplasm. It catalyses the reaction D-alanyl-D-alanine + UDP-N-acetyl-alpha-D-muramoyl-L-alanyl-gamma-D-glutamyl-meso-2,6-diaminopimelate + ATP = UDP-N-acetyl-alpha-D-muramoyl-L-alanyl-gamma-D-glutamyl-meso-2,6-diaminopimeloyl-D-alanyl-D-alanine + ADP + phosphate + H(+). The protein operates within cell wall biogenesis; peptidoglycan biosynthesis. In terms of biological role, involved in cell wall formation. Catalyzes the final step in the synthesis of UDP-N-acetylmuramoyl-pentapeptide, the precursor of murein. The sequence is that of UDP-N-acetylmuramoyl-tripeptide--D-alanyl-D-alanine ligase from Treponema pallidum (strain Nichols).